The sequence spans 212 residues: Large ribosomal subunit protein uL3 (212 aa).

Q153 bears the N5-methylglutamine mark.

The protein belongs to the universal ribosomal protein uL3 family. As to quaternary structure, part of the 50S ribosomal subunit. Forms a cluster with proteins L14 and L19. Post-translationally, methylated by PrmB.

One of the primary rRNA binding proteins, it binds directly near the 3'-end of the 23S rRNA, where it nucleates assembly of the 50S subunit. This is Large ribosomal subunit protein uL3 from Azoarcus sp. (strain BH72).